The sequence spans 340 residues: Glycerol-3-phosphate dehydrogenase [NAD(P)+] (340 aa).

NADPH contacts are provided by Ser-11, Trp-12, Arg-33, and Lys-106. Positions 106, 137, and 139 each coordinate sn-glycerol 3-phosphate. Ala-141 is a binding site for NADPH. Sn-glycerol 3-phosphate-binding residues include Lys-192, Asp-245, Ser-255, Arg-256, and Asn-257. The Proton acceptor role is filled by Lys-192. Arg-256 provides a ligand contact to NADPH. Positions 280 and 282 each coordinate NADPH.

It belongs to the NAD-dependent glycerol-3-phosphate dehydrogenase family.

The protein localises to the cytoplasm. The catalysed reaction is sn-glycerol 3-phosphate + NAD(+) = dihydroxyacetone phosphate + NADH + H(+). The enzyme catalyses sn-glycerol 3-phosphate + NADP(+) = dihydroxyacetone phosphate + NADPH + H(+). It functions in the pathway membrane lipid metabolism; glycerophospholipid metabolism. In terms of biological role, catalyzes the reduction of the glycolytic intermediate dihydroxyacetone phosphate (DHAP) to sn-glycerol 3-phosphate (G3P), the key precursor for phospholipid synthesis. The chain is Glycerol-3-phosphate dehydrogenase [NAD(P)+] from Bacillus mycoides (strain KBAB4) (Bacillus weihenstephanensis).